Consider the following 600-residue polypeptide: MEHVTEGAWESLQVPLHPRVLGALRELGFPHMTPVQSATIPLFMKNKDVAAEAVTGSGKTLAFVIPILEILLRREEKLKKNQVGAIVITPTRELAIQIDEVLSHFTKHFPQFSQILWIGGRNPGEDVERFKQHGGNIIVATPGRLEDMFRRKAEGLDLASCVKSLDVLVLDEADRLLDMGFEASINTILEFLPKQRRTGLFSATQTQEVENLVRAGLRNPVRISVKEKGVAASSTQKTPSRLENHYMICKADEKFNQLVHFLRSRQQEKHLVFFSTCACVEYYGKALEALLKKVKILCIHGKMKYKRNKIFMEFRKLQSGILVCTDVMARGIDIPEVNWVLQYDPPSNASAFVHRCGRTARIGHGGSALVFLLPMEEAYINFLAINQKCPLQEMSLQRNTIDLLPKLRAMALADRAVFEKGMKAFVSFVQAYAKHECSLIFRLKDLDFAGLARGFALLRMPRMPELRGKQFPDFVPVDIDTDTIPFKDKIREKQRQKLLEQKRKERSENEGRKKFIKNKAWSKQKAKKERKKKMNAKRKKDEGSDIDDEDMEELLNDTRLLKKFKKGKITEEEFEKGLLTSAKRTVQLTDLGVSDLEEDS.

The short motif at 9-37 is the Q motif element; the sequence is WESLQVPLHPRVLGALRELGFPHMTPVQS. One can recognise a Helicase ATP-binding domain in the interval 40-223; the sequence is IPLFMKNKDV…RAGLRNPVRI (184 aa). 53-60 serves as a coordination point for ATP; sequence AVTGSGKT. The DEAD box signature appears at 171 to 174; the sequence is DEAD. The region spanning 254 to 402 is the Helicase C-terminal domain; the sequence is KFNQLVHFLR…EMSLQRNTID (149 aa). Residues 499 to 513 show a composition bias toward basic and acidic residues; that stretch reads LEQKRKERSENEGRK. The interval 499 to 551 is disordered; it reads LEQKRKERSENEGRKKFIKNKAWSKQKAKKERKKKMNAKRKKDEGSDIDDEDM. Over residues 514–538 the composition is skewed to basic residues; sequence KFIKNKAWSKQKAKKERKKKMNAKR. Residues 533–562 form an important for nuclear localization region; the sequence is KMNAKRKKDEGSDIDDEDMEELLNDTRLLK. 2 positions are modified to phosphoserine: Ser-544 and Ser-594.

It belongs to the DEAD box helicase family. DDX55/SPB4 subfamily. In terms of assembly, interacts with 28S rRNA. Interacts with double-stranded RNA substrates in vitro; the interaction stimulates ATPase activity.

It is found in the nucleus. It localises to the nucleoplasm. The enzyme catalyses ATP + H2O = ADP + phosphate + H(+). In terms of biological role, probable ATP-binding RNA helicase. Has ATPase activity and is involved in the maturation of precursor large subunit rRNAs. This is ATP-dependent RNA helicase DDX55 (Ddx55) from Mus musculus (Mouse).